A 245-amino-acid polypeptide reads, in one-letter code: tRNA pseudouridine synthase A (245 aa).

The Nucleophile role is filled by Asp-52. Residue Tyr-111 participates in substrate binding.

Belongs to the tRNA pseudouridine synthase TruA family. As to quaternary structure, homodimer.

The enzyme catalyses uridine(38/39/40) in tRNA = pseudouridine(38/39/40) in tRNA. Formation of pseudouridine at positions 38, 39 and 40 in the anticodon stem and loop of transfer RNAs. In Ehrlichia chaffeensis (strain ATCC CRL-10679 / Arkansas), this protein is tRNA pseudouridine synthase A.